A 185-amino-acid chain; its full sequence is Small ribosomal subunit protein bS16 (185 aa).

Residues 83–185 (QWTHGNNPEK…APASEETTEG (103 aa)) form a disordered region. Basic and acidic residues predominate over residues 89 to 125 (NPEKAKPGKKAQERDAERTQRDADRVAAEAQAKEDAK). Composition is skewed to low complexity over residues 126–146 (AAAA…AAAP) and 159–176 (VEAA…AEEA).

Belongs to the bacterial ribosomal protein bS16 family.

This Caulobacter sp. (strain K31) protein is Small ribosomal subunit protein bS16.